Reading from the N-terminus, the 206-residue chain is Large ribosomal subunit protein uL4 (206 aa).

The segment at 43–78 (ARSGNRKQKDREEVKHTTKKPWRQKGTGRARAGMSS) is disordered. Residues 49–58 (KQKDREEVKH) are compositionally biased toward basic and acidic residues. Over residues 59-70 (TTKKPWRQKGTG) the composition is skewed to basic residues.

This sequence belongs to the universal ribosomal protein uL4 family. As to quaternary structure, part of the 50S ribosomal subunit.

Its function is as follows. One of the primary rRNA binding proteins, this protein initially binds near the 5'-end of the 23S rRNA. It is important during the early stages of 50S assembly. It makes multiple contacts with different domains of the 23S rRNA in the assembled 50S subunit and ribosome. Functionally, forms part of the polypeptide exit tunnel. The protein is Large ribosomal subunit protein uL4 of Cupriavidus metallidurans (strain ATCC 43123 / DSM 2839 / NBRC 102507 / CH34) (Ralstonia metallidurans).